The following is a 142-amino-acid chain: ATP synthase epsilon chain (142 aa).

It belongs to the ATPase epsilon chain family. As to quaternary structure, F-type ATPases have 2 components, CF(1) - the catalytic core - and CF(0) - the membrane proton channel. CF(1) has five subunits: alpha(3), beta(3), gamma(1), delta(1), epsilon(1). CF(0) has three main subunits: a, b and c.

The protein resides in the cell inner membrane. In terms of biological role, produces ATP from ADP in the presence of a proton gradient across the membrane. The sequence is that of ATP synthase epsilon chain from Shewanella oneidensis (strain ATCC 700550 / JCM 31522 / CIP 106686 / LMG 19005 / NCIMB 14063 / MR-1).